The primary structure comprises 254 residues: Chalcone isomerase cfoK (254 aa).

Residues His-33 and Tyr-50 contribute to the active site.

The enzyme catalyses a chalcone = a flavanone.. The protein operates within secondary metabolite biosynthesis; flavonoid biosynthesis. Its function is as follows. Chalcone isomerase; part of the gene cluster that mediates the biosynthesis of chlorflavonin, a fungal flavonoid with acetolactate synthase inhibitory activity. Within the pathway, cfoK acts as chalcone isomerase (CHI), the key enzyme responsible for the tricyclic formation of flavanone through Michael-type intramolecular cyclization of chalcone. The hydrogen at C2'-OH is extracted by the imidazole ring of His-33, which induces the oxa-Michael addition to form the intermediate enolate through 6-endo-trig mode cyclization. The enolate can then be stabilized by a hydrogen bond with the Tyr-50 residue. Following enol tautomerization, the C ring, a gamma-pyranone ring, is formed. The pathway begins with the PKS-NRPS hybrid synthetase cfoA that uses benzoic acid or p-hydroxybenzoic acid as a starter unit with four rounds of chain elongation using malonyl-CoA to form the chalcone skeleton. Then, a new type of chalcone isomerase, cfoK, catalyzes the conversion of the chalcone into a flavanone by a histidine-mediated oxa-Michael addition mechanism. The desaturation of flavanone to flavone is catalyzed by a new type of flavone synthase, the flavin mononucleotide (FMN)-dependent oxidoreductase cfoJ. Monooxygenases cfoF, cfoG, and P450 cfoH are responsible for the hydroxylation of the flavonoid skeleton at sites C3, C8, and C2', respectively. Like cfoF, the dehydratase cfoI plays also a role in the hydroxylation of position C3. Methyltransferases cfoB, cfoC, and cfoD then catalyze the methylation of C7-OH, C8-OH, and C3-OH, respectively. Finally, the monooxygenase cfoE is responsible for the chlorination of flavonoid at position C3'. The chain is Chalcone isomerase cfoK from Aspergillus candidus.